The sequence spans 1578 residues: DNA-directed RNA polymerase subunit beta' (1578 aa).

Positions 101, 103, 115, and 118 each coordinate Zn(2+). Mg(2+) is bound by residues aspartate 1286, aspartate 1288, and aspartate 1290.

Belongs to the RNA polymerase beta' chain family. RpoC1 subfamily. As to quaternary structure, in plastids the minimal PEP RNA polymerase catalytic core is composed of four subunits: alpha, beta, beta', and beta''. When a (nuclear-encoded) sigma factor is associated with the core the holoenzyme is formed, which can initiate transcription. Mg(2+) is required as a cofactor. Zn(2+) serves as cofactor.

The protein resides in the plastid. It localises to the chloroplast. It catalyses the reaction RNA(n) + a ribonucleoside 5'-triphosphate = RNA(n+1) + diphosphate. Functionally, DNA-dependent RNA polymerase catalyzes the transcription of DNA into RNA using the four ribonucleoside triphosphates as substrates. In Tupiella akineta (Green alga), this protein is DNA-directed RNA polymerase subunit beta'.